A 249-amino-acid chain; its full sequence is Probable hydroxyacylglutathione hydrolase ECU02_0580 (249 aa).

Zn(2+)-binding residues include His75, His77, Asp79, His80, His126, Asp144, and His183. Residues 183-185 (HDY) and 240-243 (RERK) each bind substrate.

This sequence belongs to the metallo-beta-lactamase superfamily. Glyoxalase II family. Zn(2+) serves as cofactor.

Its subcellular location is the cytoplasm. It is found in the nucleus. The catalysed reaction is an S-(2-hydroxyacyl)glutathione + H2O = a 2-hydroxy carboxylate + glutathione + H(+). The protein operates within secondary metabolite metabolism; methylglyoxal degradation; (R)-lactate from methylglyoxal: step 2/2. In terms of biological role, thiolesterase that catalyzes the hydrolysis of S-D-lactoyl-glutathione to form glutathione and D-lactic acid. The protein is Probable hydroxyacylglutathione hydrolase ECU02_0580 of Encephalitozoon cuniculi (strain GB-M1) (Microsporidian parasite).